A 218-amino-acid chain; its full sequence is Pyridoxine/pyridoxamine 5'-phosphate oxidase (218 aa).

Residues 12-15 (RMSY) and Arg-70 each bind substrate. FMN is bound by residues 65-70 (RTVLLR), 80-81 (YT), Lys-87, and Gln-109. 3 residues coordinate substrate: Tyr-127, Arg-131, and Ser-135. FMN-binding positions include 145-146 (QS) and Trp-191. Substrate is bound at residue 197-199 (RLH). Arg-201 lines the FMN pocket.

This sequence belongs to the pyridoxamine 5'-phosphate oxidase family. In terms of assembly, homodimer. The cofactor is FMN.

The catalysed reaction is pyridoxamine 5'-phosphate + O2 + H2O = pyridoxal 5'-phosphate + H2O2 + NH4(+). It carries out the reaction pyridoxine 5'-phosphate + O2 = pyridoxal 5'-phosphate + H2O2. The protein operates within cofactor metabolism; pyridoxal 5'-phosphate salvage; pyridoxal 5'-phosphate from pyridoxamine 5'-phosphate: step 1/1. It participates in cofactor metabolism; pyridoxal 5'-phosphate salvage; pyridoxal 5'-phosphate from pyridoxine 5'-phosphate: step 1/1. Catalyzes the oxidation of either pyridoxine 5'-phosphate (PNP) or pyridoxamine 5'-phosphate (PMP) into pyridoxal 5'-phosphate (PLP). The sequence is that of Pyridoxine/pyridoxamine 5'-phosphate oxidase from Acinetobacter baylyi (strain ATCC 33305 / BD413 / ADP1).